Here is a 103-residue protein sequence, read N- to C-terminus: MTLFLVIFFILFLLLCYFFSFKRTNKMEIGINPIKKIPWSDNEHIFVSSLFTNKDKYLTGPMRLTYRPDSKTAVLDFKGTNYTYYLDNFDDVRKLVPTLLLSK.

The chain crosses the membrane as a helical; Signal-anchor span at residues 1-21 (MTLFLVIFFILFLLLCYFFSF). The Virion surface portion of the chain corresponds to 22–103 (KRTNKMEIGI…KLVPTLLLSK (82 aa)).

It belongs to the orthopoxvirus OPG086 family. Interacts with OPG099/L5. Component of the entry fusion complex (EFC) composed of OPG053, OPG076, OPG086, OPG094, OPG095, OPG099, OPG107, OPG143, OPG104, OPG147 and OPG155. Except for OPG095 and OPG053, each of the EFC proteins is required for assembly or stability of the complex. Post-translationally, unglycosylated because produced in viral factories instead of the classic ER -Golgi route.

It localises to the virion membrane. Its function is as follows. Component of the entry fusion complex (EFC), which consists of 11 proteins. During cell infection, this complex mediates entry of the virion core into the host cytoplasm by a two-step mechanism consisting of lipid mixing of the viral and cellular membranes and subsequent pore formation. This is Entry-fusion complex protein OPG086 (OPG086) from Vertebrata (FPV).